The chain runs to 579 residues: Vacuolar protein 8 (579 aa).

Glycine 2 is lipidated: N-myristoyl glycine. S-palmitoyl cysteine attachment occurs at residues cysteine 4, cysteine 5, and cysteine 7. 9 ARM repeats span residues 39 to 76 (NKDQYDFYSGKPLRALTTLVYSDNLNLQRSAALAFAEI), 77 to 116 (TEKYVSPVSRDVLEPILMLLTNPDPQIRIASCAALGNLAV), 118 to 157 (NENKLLIVEMGGLEPLIEQMKSDNVEVQCNAVGCITNLAT), 159 to 198 (DDNKIEIAQSGALVPLTKLARSSNIRVQRNATGALLNMTH), 200 to 239 (GENRKELVDAGAVPVLVSLLSSMDADVQYYCTTALSNIAV), 241 to 282 (ESNR…NLAS), 284 to 323 (TNYQLEIVRAGGLPDLVQLIQSDSLPLVLASVACIRNISI), 325 to 365 (PLNE…NLAA), and 409 to 448 (DNTKYDLLQQDVLKVLIPMTMSQDQEISGNSAAAVANLIS). A compositionally biased stretch (polar residues) spans 534–556 (QDTNIDHNGNSNNIEGNGRSNKQ). The disordered stretch occupies residues 534–560 (QDTNIDHNGNSNNIEGNGRSNKQSSEK).

The protein belongs to the beta-catenin family.

The protein localises to the vacuole membrane. Functions in both vacuole inheritance and protein targeting from the cytoplasm to vacuole. The protein is Vacuolar protein 8 (VAC8) of Kluyveromyces lactis (strain ATCC 8585 / CBS 2359 / DSM 70799 / NBRC 1267 / NRRL Y-1140 / WM37) (Yeast).